The primary structure comprises 173 residues: Co-chaperone protein HscB homolog (173 aa).

A J domain is found at 5–77 (SHFALFDLEP…SQRARYLLSL (73 aa)).

The protein belongs to the HscB family. As to quaternary structure, interacts with HscA and stimulates its ATPase activity.

Functionally, co-chaperone involved in the maturation of iron-sulfur cluster-containing proteins. Seems to help targeting proteins to be folded toward HscA. The protein is Co-chaperone protein HscB homolog of Azotobacter vinelandii (strain DJ / ATCC BAA-1303).